The sequence spans 365 residues: P43 5S RNA-binding protein (365 aa).

9 consecutive C2H2-type zinc fingers follow at residues 15 to 39, 45 to 69, 75 to 100, 106 to 130, 136 to 160, 163 to 187, 191 to 213, 220 to 245, and 251 to 275; these read LRCP…MAGH, WKCG…VKRH, LSCP…LYKH, LKCF…LSVH, SVCD…QKRH, YRCS…VKKH, LQCA…KATH, LPCP…RKLH, and HRCP…LVVH.

The 42S RNP particle comprises four subunits each of which contains one molecule of 5S RNA, three molecules of tRNA, two molecules of p50 (EF1-alpha) and one molecule of the 5S RNA binding protein 43.

P43 is a 5S RNA binding protein which is a major constituent of oocytes and comprises part of a 42S ribonucleoprotein storage particle. The sequence is that of P43 5S RNA-binding protein from Xenopus laevis (African clawed frog).